The primary structure comprises 235 residues: Protein GrpE (235 aa).

A compositionally biased stretch (polar residues) spans 1-18 (MTDGNQKPDGNSGEQVTV). 2 disordered regions span residues 1–50 (MTDG…DAAH) and 198–235 (ESVD…PSGS). A compositionally biased stretch (basic and acidic residues) spans 19–35 (TDKRRIDPETGEVRHVP).

This sequence belongs to the GrpE family. Homodimer.

It is found in the cytoplasm. Participates actively in the response to hyperosmotic and heat shock by preventing the aggregation of stress-denatured proteins, in association with DnaK and GrpE. It is the nucleotide exchange factor for DnaK and may function as a thermosensor. Unfolded proteins bind initially to DnaJ; upon interaction with the DnaJ-bound protein, DnaK hydrolyzes its bound ATP, resulting in the formation of a stable complex. GrpE releases ADP from DnaK; ATP binding to DnaK triggers the release of the substrate protein, thus completing the reaction cycle. Several rounds of ATP-dependent interactions between DnaJ, DnaK and GrpE are required for fully efficient folding. This is Protein GrpE from Mycobacterium bovis (strain BCG / Pasteur 1173P2).